A 143-amino-acid chain; its full sequence is Nucleoside diphosphate kinase (143 aa).

Lys11, Phe59, Arg87, Thr93, Arg104, and Asn114 together coordinate ATP. His117 serves as the catalytic Pros-phosphohistidine intermediate.

This sequence belongs to the NDK family. As to quaternary structure, homotetramer. It depends on Mg(2+) as a cofactor.

Its subcellular location is the cytoplasm. The enzyme catalyses a 2'-deoxyribonucleoside 5'-diphosphate + ATP = a 2'-deoxyribonucleoside 5'-triphosphate + ADP. It carries out the reaction a ribonucleoside 5'-diphosphate + ATP = a ribonucleoside 5'-triphosphate + ADP. Its function is as follows. Major role in the synthesis of nucleoside triphosphates other than ATP. The ATP gamma phosphate is transferred to the NDP beta phosphate via a ping-pong mechanism, using a phosphorylated active-site intermediate. The sequence is that of Nucleoside diphosphate kinase from Pseudoalteromonas atlantica (strain T6c / ATCC BAA-1087).